We begin with the raw amino-acid sequence, 463 residues long: L-seryl-tRNA(Sec) selenium transferase (463 aa).

Lys-295 is modified (N6-(pyridoxal phosphate)lysine).

The protein belongs to the SelA family. Homodecamer; pentamer of dimers. Binds only one seryl-tRNA(Sec) per dimer. Pyridoxal 5'-phosphate is required as a cofactor.

The protein resides in the cytoplasm. It carries out the reaction L-seryl-tRNA(Sec) + selenophosphate + H(+) = L-selenocysteinyl-tRNA(Sec) + phosphate. The protein operates within aminoacyl-tRNA biosynthesis; selenocysteinyl-tRNA(Sec) biosynthesis; selenocysteinyl-tRNA(Sec) from L-seryl-tRNA(Sec) (bacterial route): step 1/1. Functionally, converts seryl-tRNA(Sec) to selenocysteinyl-tRNA(Sec) required for selenoprotein biosynthesis. In Escherichia coli O81 (strain ED1a), this protein is L-seryl-tRNA(Sec) selenium transferase.